Consider the following 605-residue polypeptide: MSDYFSKLKEHVVESTEINGCTPSIATATFNAPYEVARKTKMLGVTDSSLLNLPAWKRLQSLYEKYGNDSILSHFEKDHQRFQRYSIEIDLHSDDNFLFLDYSKSHINDEIKDALVALAEERGVRAFAKAMFDGQRVNSTENRAVLHVALRNRSNRPIIVDGKDVMSDVNNVLAQMKDFTERVRSGEWKGQTGKSIYNIVNIGIGGSDLGPVMVTEALKPFSKRDLHCFFVSNVDGTHMAEVLKQVNLEETIFIIASKTFTTQETLTNAMSARNALMSYLKENGISTDGAVAKHFVALSTNTEKVREFGIDTVNMFAFWDWVGGRYSVWSAIGLSVMLSIGYDNFVEFLTGAHVMDNHFASTPTEQNLPMMLALVGIWYNNFFGSETQAVLPYDQYLWRLPAYLQQLDMESNGKGVTKKSGAVAVQTGPIVFGEAGTNGQHAFYQLIHQGTKIIPCDFIGCVQTQNRVGDHHRTLMSNFFAQTEALMVGKNAEEVRQELVKSGMSGDAIENMIPHKTFTGSRPSNSILVNALTPRALGAIIAMYEHKVLVQGAIWGINSYDQWGVELGKVLAKSILPQLKSGNIVSDHDGSTNGLINMFNTRAHL.

The Proton donor role is filled by E410. Residues H441 and K569 contribute to the active site.

This sequence belongs to the GPI family.

The protein resides in the cytoplasm. The catalysed reaction is alpha-D-glucose 6-phosphate = beta-D-fructose 6-phosphate. It participates in carbohydrate degradation; glycolysis; D-glyceraldehyde 3-phosphate and glycerone phosphate from D-glucose: step 2/4. In Leishmania mexicana, this protein is Glucose-6-phosphate isomerase (PGI).